Here is a 308-residue protein sequence, read N- to C-terminus: Very-long-chain enoyl-CoA reductase (308 aa).

Residues 1–86 (MKHYEVEILD…YFRDLGAQIS (86 aa)) are Cytoplasmic-facing. Residue Lys-22 is modified to N6-acetyllysine. The residue at position 58 (Ser-58) is a Phosphoserine. Lys-60 carries the N6-acetyllysine modification. A helical transmembrane segment spans residues 87 to 106 (WVTVFLTEYAGPLFIYLLFY). Topologically, residues 107 to 124 (FRVPFIYGHKYDFTSSRH) are lumenal. The helical transmembrane segment at 125-147 (TVVHLACICHSFHYIKRLLETLF) threads the bilayer. Residues 148–158 (VHRFSHGTMPL) lie on the Cytoplasmic side of the membrane. Residues 159-180 (RNIFKNCTYYWGFAAWMAYYIN) traverse the membrane as a helical segment. Topologically, residues 181–189 (HPLYTPPTY) are lumenal. Residues 190 to 216 (GAQQVKLALAIFVICQLGNFSIHMALR) traverse the membrane as a helical segment. Residues 217–245 (DLRPAGSKTRKIPYPTKNPFTWLFLLVSC) lie on the Cytoplasmic side of the membrane. The chain crosses the membrane as a helical span at residues 246-262 (PNYTYEVGSWIGFAIMT). Residues 263–264 (QC) are Lumenal-facing. Residues 265 to 292 (LPVALFSLVGFTQMTIWAKGKHRSYLKE) form a helical membrane-spanning segment. Residues 293-308 (FRDYPPLRMPIIPFLL) lie on the Cytoplasmic side of the membrane.

This sequence belongs to the steroid 5-alpha reductase family. As to quaternary structure, interacts with ELOVL1 and LASS2. Interacts with HACD1 and HACD2 (via the third lumenal loop), but not with HACD3 and HACD4. Interacts with ELOVL1, ELOVL2, ELOVL3, ELOVL5 and ELOVL7 in the presence of acyl-CoA; interaction with HACD1/2 and that with ELOVLs are mutually exclusive. In terms of processing, glycosylated. As to expression, expressed in most tissues tested. Highly expressed in skeletal muscle.

The protein resides in the endoplasmic reticulum membrane. It catalyses the reaction a very-long-chain 2,3-saturated fatty acyl-CoA + NADP(+) = a very-long-chain (2E)-enoyl-CoA + NADPH + H(+). The catalysed reaction is octadecanoyl-CoA + NADP(+) = (2E)-octadecenoyl-CoA + NADPH + H(+). The enzyme catalyses (2E,7Z,10Z,13Z,16Z)-docosapentaenoyl-CoA + NADPH + H(+) = (7Z,10Z,13Z,16Z)-docosatetraenoyl-CoA + NADP(+). It carries out the reaction (2E,7Z,10Z,13Z,16Z,19Z)-docosahexaenoyl-CoA + NADPH + H(+) = (7Z,10Z,13Z,16Z,19Z)-docosapentaenoyl-CoA + NADP(+). It catalyses the reaction (2E,8Z,11Z,14Z)-eicosatetraenoyl-CoA + NADPH + H(+) = (8Z,11Z,14Z)-eicosatrienoyl-CoA + NADP(+). The catalysed reaction is (2E)-hexadecenoyl-CoA + NADPH + H(+) = hexadecanoyl-CoA + NADP(+). Its pathway is lipid metabolism; fatty acid biosynthesis. It participates in lipid metabolism; sphingolipid metabolism. In terms of biological role, involved in both the production of very long-chain fatty acids for sphingolipid synthesis and the degradation of the sphingosine moiety in sphingolipids through the sphingosine 1-phosphate metabolic pathway. Catalyzes the last of the four reactions of the long-chain fatty acids elongation cycle. This endoplasmic reticulum-bound enzymatic process, allows the addition of 2 carbons to the chain of long- and very long-chain fatty acids/VLCFAs per cycle. This enzyme reduces the trans-2,3-enoyl-CoA fatty acid intermediate to an acyl-CoA that can be further elongated by entering a new cycle of elongation. Thereby, it participates in the production of VLCFAs of different chain lengths that are involved in multiple biological processes as precursors of membrane lipids and lipid mediators. Catalyzes the saturation step of the sphingosine 1-phosphate metabolic pathway, the conversion of trans-2-hexadecenoyl-CoA to palmitoyl-CoA. In Homo sapiens (Human), this protein is Very-long-chain enoyl-CoA reductase (TECR).